Reading from the N-terminus, the 190-residue chain is MSIASDKLVKECEEKMVKTIEAVKEKFTAIRAGRANVSMLDGIKVENYGSEVPLNQIGTVSAPEARLLVIDPWDKTLISKIEKAILAANIGMTPNNDGRVIRLVLPELTADRRKEYVKLAKNEAENGKIAIRNIRKDINNHLKKLEKDKENPISEDELKKEETNVQTLTDKYVKEIDDLLAKKEKEITTI.

The protein belongs to the RRF family.

It is found in the cytoplasm. In terms of biological role, responsible for the release of ribosomes from messenger RNA at the termination of protein biosynthesis. May increase the efficiency of translation by recycling ribosomes from one round of translation to another. This is Ribosome-recycling factor from Fusobacterium nucleatum subsp. nucleatum (strain ATCC 25586 / DSM 15643 / BCRC 10681 / CIP 101130 / JCM 8532 / KCTC 2640 / LMG 13131 / VPI 4355).